The following is a 446-amino-acid chain: MAAPPATASAPSLRPSAASPRAAAARSVAVPSGPRTVGPRRDGGRFLGVRAAKAVSGVQSGTVVDDGVQRPWKLSDARLVLEDGSVWKAKSFGASGTQVGEVVFNTSLTGYQEILTDPSYAGQFVLMTNPHIGNTGVNPDDEESNRCFLAGLIIRNLSICTSNWRCTETLEEYLMKRNIMGIYDVDTRAITRRLREDGSLIGVLSTDQSRTDDELLEMAKNWKIVGVDLISGVTCDAPYEWSDKTDSEWEFKKGQSTESFHVVAYDFGIKHNILRRLTSYGCKITVVPANWPASEVLNLKPDGVFFSNGPGDPAAVPYAVKTVQEIIGKVPVFGICMGHQLIGQALGGKTFKMKFGHHGGNHPVCDLRSGRVDISAQNHNYAVDPESLPEGVKVTHINLNDNSCAGLQYPKMKLLSLQYHPESSPGPHDSDLAFGEFIEMMKNNRL.

Over residues 1 to 32 the composition is skewed to low complexity; it reads MAAPPATASAPSLRPSAASPRAAAARSVAVPS. Positions 1 to 44 are disordered; that stretch reads MAAPPATASAPSLRPSAASPRAAAARSVAVPSGPRTVGPRRDGG. Residues 1–50 constitute a chloroplast transit peptide; it reads MAAPPATASAPSLRPSAASPRAAAARSVAVPSGPRTVGPRRDGGRFLGVR. Residues 261–446 form the Glutamine amidotransferase type-1 domain; sequence HVVAYDFGIK…FIEMMKNNRL (186 aa). The Nucleophile role is filled by Cys336. Residues His420 and Glu422 contribute to the active site.

This sequence belongs to the CarA family. In terms of assembly, heterodimer composed of 2 chains; the small (or glutamine) chain promotes the hydrolysis of glutamine to ammonia, which is used by the large (or ammonia) chain to synthesize carbamoyl phosphate.

The protein localises to the plastid. Its subcellular location is the chloroplast. The enzyme catalyses hydrogencarbonate + L-glutamine + 2 ATP + H2O = carbamoyl phosphate + L-glutamate + 2 ADP + phosphate + 2 H(+). It carries out the reaction L-glutamine + H2O = L-glutamate + NH4(+). Its pathway is amino-acid biosynthesis; L-arginine biosynthesis; carbamoyl phosphate from bicarbonate: step 1/1. It functions in the pathway pyrimidine metabolism; UMP biosynthesis via de novo pathway; (S)-dihydroorotate from bicarbonate: step 1/3. In terms of biological role, small subunit of the arginine-specific carbamoyl phosphate synthase (CPSase). CPSase catalyzes the formation of carbamoyl phosphate from the ammonia moiety of glutamine, carbonate, and phosphate donated by ATP, the first step of the arginine biosynthetic pathway. The small subunit (glutamine amidotransferase) binds and cleaves glutamine to supply the large subunit with the substrate ammonia. This is Carbamoyl phosphate synthase small chain, chloroplastic (CARA) from Oryza sativa subsp. japonica (Rice).